Reading from the N-terminus, the 1085-residue chain is Aminopeptidase N (1085 aa).

Residues 1–30 constitute a signal peptide (required for ER targeting and membrane association; not cleaved); that stretch reads MKLTKGCAYKYIIFTVLILANILYDNKKRC. A sufficient for targeting to the food vacuole region spans residues 1-200; the sequence is MKLTKGCAYK…VKKNEPKIHY (200 aa). The disordered stretch occupies residues 108 to 130; sequence EKGDNNNNNHQNNNGNDNKKRLG. Residues 112 to 123 show a composition bias toward low complexity; it reads NNNNNHQNNNGN. The a peptide site is built by E319, G460, A461, and E463. Zn(2+) is bound at residue H496. Residue E497 is the Proton acceptor of the active site. Zn(2+) contacts are provided by H500 and E519.

It belongs to the peptidase M1 family. As to quaternary structure, heterodimer of the p68 form and the p35 form which are derived from the p120 precursor. Zn(2+) serves as cofactor. In terms of processing, the full length protein appears to be cleaved into a 120 kDa precursor. This precursor is then proteolytically cleaved at the N-terminus generating a 96 kDa form which is further processed at the C-terminus into 68 kDa and 35 kDa forms that remain associated.

It localises to the parasitophorous vacuole membrane. The protein localises to the nucleus. Its subcellular location is the cytoplasm. It is found in the vacuole lumen. With respect to regulation, inhibited by 1,10-phenanthroline, EDTA and bestatin. Inhibited by (Benzyl)Tyr-Ala (BTA). Activity is not affected by phosphoramidin, PMSF, leupeptin, iodoacetamide or pepstatin. Its function is as follows. Displays aminopeptidase activity with a broad substrate specificity. Preferentially, cleaves after Leu and Met, but also cleaves after Ala and Arg. Low activity towards Lys, Phe, Tyr, Trp, Gln, Ser and Gly and negligible activity towards Glu, Asp, Pro, Ile, Thr, Val, His and Asn. Has dipeptidase activity. Plays a role in the terminal stages of host hemoglobin digestion by cleaving the N-terminal residue of small hemoglobin-derived oligopeptides. This chain is Aminopeptidase N, found in Plasmodium falciparum (isolate 3D7).